Reading from the N-terminus, the 144-residue chain is D-aminoacyl-tRNA deacylase (144 aa).

The short motif at 136–137 is the Gly-cisPro motif, important for rejection of L-amino acids element; sequence GP.

It belongs to the DTD family. Homodimer.

The protein resides in the cytoplasm. It catalyses the reaction glycyl-tRNA(Ala) + H2O = tRNA(Ala) + glycine + H(+). It carries out the reaction a D-aminoacyl-tRNA + H2O = a tRNA + a D-alpha-amino acid + H(+). An aminoacyl-tRNA editing enzyme that deacylates mischarged D-aminoacyl-tRNAs. Also deacylates mischarged glycyl-tRNA(Ala), protecting cells against glycine mischarging by AlaRS. Acts via tRNA-based rather than protein-based catalysis; rejects L-amino acids rather than detecting D-amino acids in the active site. By recycling D-aminoacyl-tRNA to D-amino acids and free tRNA molecules, this enzyme counteracts the toxicity associated with the formation of D-aminoacyl-tRNA entities in vivo and helps enforce protein L-homochirality. This chain is D-aminoacyl-tRNA deacylase, found in Corynebacterium efficiens (strain DSM 44549 / YS-314 / AJ 12310 / JCM 11189 / NBRC 100395).